Here is a 102-residue protein sequence, read N- to C-terminus: Small ribosomal subunit protein uS10 (102 aa).

It belongs to the universal ribosomal protein uS10 family. In terms of assembly, part of the 30S ribosomal subunit.

In terms of biological role, involved in the binding of tRNA to the ribosomes. In Leifsonia xyli subsp. xyli (strain CTCB07), this protein is Small ribosomal subunit protein uS10.